A 58-amino-acid polypeptide reads, in one-letter code: Potassium channel toxin alpha-KTx 9.9 (58 aa).

The signal sequence occupies residues Lys1–Ala21. Residues Ile22 to Ala30 constitute a propeptide that is removed on maturation. Intrachain disulfides connect Cys33–Cys49, Cys36–Cys54, and Cys40–Cys56.

This sequence belongs to the short scorpion toxin superfamily. Potassium channel inhibitor family. Alpha-KTx 09 subfamily. In terms of tissue distribution, expressed by the venom gland.

Its subcellular location is the secreted. Potassium channel inhibitor. The protein is Potassium channel toxin alpha-KTx 9.9 of Buthus israelis (Israeli scorpion).